A 383-amino-acid polypeptide reads, in one-letter code: Putative type I specificity subunit S.MgeORF438P (383 aa).

The interval 1–142 (MTPKLKLNNN…KELEIPFTSN (142 aa)) is TRD1. Positions 143–182 (KNEQHAIANTLSVFDERLENLASLIEINRKLRDEYAHKLF) are conserved region 1. Residues 143–182 (KNEQHAIANTLSVFDERLENLASLIEINRKLRDEYAHKLF) are a coiled coil. The interval 183-330 (SLDEAFLSHW…GEIKVPYVKS (148 aa)) is TRD2. The segment at 331–370 (FQLQRKAGKIVFLLDQKLDQYKKELSSLTVIRDTLLKKLF) is conserved region 2. The stretch at 331-370 (FQLQRKAGKIVFLLDQKLDQYKKELSSLTVIRDTLLKKLF) forms a coiled coil.

The protein belongs to the type-I restriction system S methylase family.

The specificity (S) subunit of a type I restriction enzyme; this subunit dictates DNA sequence specificity. This bacterium does not encode the associated endonuclease or methylase subunits. The polypeptide is Putative type I specificity subunit S.MgeORF438P (Mycoplasma genitalium (strain ATCC 33530 / DSM 19775 / NCTC 10195 / G37) (Mycoplasmoides genitalium)).